The primary structure comprises 825 residues: Penicillin-binding protein 1A (825 aa).

At 1–6 (MKFIKR) the chain is on the cytoplasmic side. Residues 7 to 27 (LLVFSLICIILGVTTIFGFYF) form a helical; Signal-anchor for type II membrane protein membrane-spanning segment. Residues 28 to 825 (YVKSDLPDVA…YSTSSGEELF (798 aa)) lie on the Periplasmic side of the membrane. A transglycosylase region spans residues 48–216 (MQVFSQDGKL…STMNPIYSVE (169 aa)). Glutamate 86 (proton donor; for transglycosylase activity) is an active-site residue. The transpeptidase stretch occupies residues 413–752 (PRTQDGAITA…GKTALPAWVE (340 aa)). Catalysis depends on serine 471, which acts as the Acyl-ester intermediate; for transpeptidase activity.

In the N-terminal section; belongs to the glycosyltransferase 51 family. It in the C-terminal section; belongs to the transpeptidase family.

The protein localises to the cell inner membrane. The enzyme catalyses [GlcNAc-(1-&gt;4)-Mur2Ac(oyl-L-Ala-gamma-D-Glu-L-Lys-D-Ala-D-Ala)](n)-di-trans,octa-cis-undecaprenyl diphosphate + beta-D-GlcNAc-(1-&gt;4)-Mur2Ac(oyl-L-Ala-gamma-D-Glu-L-Lys-D-Ala-D-Ala)-di-trans,octa-cis-undecaprenyl diphosphate = [GlcNAc-(1-&gt;4)-Mur2Ac(oyl-L-Ala-gamma-D-Glu-L-Lys-D-Ala-D-Ala)](n+1)-di-trans,octa-cis-undecaprenyl diphosphate + di-trans,octa-cis-undecaprenyl diphosphate + H(+). It catalyses the reaction Preferential cleavage: (Ac)2-L-Lys-D-Ala-|-D-Ala. Also transpeptidation of peptidyl-alanyl moieties that are N-acyl substituents of D-alanine.. It participates in cell wall biogenesis; peptidoglycan biosynthesis. Cell wall formation. Synthesis of cross-linked peptidoglycan from the lipid intermediates. The enzyme has a penicillin-insensitive transglycosylase N-terminal domain (formation of linear glycan strands) and a penicillin-sensitive transpeptidase C-terminal domain (cross-linking of the peptide subunits). The polypeptide is Penicillin-binding protein 1A (mrcA) (Vibrio cholerae serotype O1 (strain ATCC 39315 / El Tor Inaba N16961)).